The primary structure comprises 252 residues: Neurexophilin-3 (252 aa).

The first 22 residues, 1 to 22, serve as a signal peptide directing secretion; it reads MQLTRCCFVFLVQGSLYLVICG. The interval 23–75 is II; it reads QDDGPPGSEDPEHDDHEGQPRPRVPRKRGHISPKSRPLANSTLLGLLAPPGEV. The tract at residues 27 to 59 is disordered; that stretch reads PPGSEDPEHDDHEGQPRPRVPRKRGHISPKSRP. Residues 45-55 are compositionally biased toward basic residues; it reads RVPRKRGHISP. N-linked (GlcNAc...) asparagine glycans are attached at residues Asn-62, Asn-127, Asn-137, and Asn-143. The tract at residues 76-157 is III; the sequence is WGVLGQPPNR…LVPPSKAVEF (82 aa). The segment at 158–166 is IV (linker domain); it reads HQEQQIFIE. A v (Cys-rich) region spans residues 167 to 252; it reads AKASKIFNCR…HSDTPYYPSG (86 aa).

Belongs to the neurexophilin family. In terms of processing, may be proteolytically processed at the boundary between the N-terminal non-conserved and the central conserved domain in neuron-like cells. In terms of tissue distribution, highest level in brain, present also in lung, kidney and testis.

It localises to the secreted. In terms of biological role, may be signaling molecules that resemble neuropeptides. Ligand for alpha-neurexins. In Mus musculus (Mouse), this protein is Neurexophilin-3 (Nxph3).